A 364-amino-acid polypeptide reads, in one-letter code: Histidinol-phosphate aminotransferase BQ2027_MB2256C (364 aa).

The residue at position 220 (Lys-220) is an N6-(pyridoxal phosphate)lysine.

It belongs to the class-I pyridoxal-phosphate-dependent aminotransferase family. In terms of assembly, monomer. Pyridoxal 5'-phosphate is required as a cofactor.

It is found in the secreted. Its subcellular location is the cell wall. The catalysed reaction is L-histidinol phosphate + 2-oxoglutarate = 3-(imidazol-4-yl)-2-oxopropyl phosphate + L-glutamate. In terms of biological role, aminotransferase that catalyzes the conversion of histidinol phosphate and 2-oxoglutarate into L-glutamate and imidazole acetol phosphate. Might play a significant role in mediating histidine biosynthesis during infection. Facilitates mycobacterial survival and virulence in macrophages. This Mycobacterium bovis (strain ATCC BAA-935 / AF2122/97) protein is Histidinol-phosphate aminotransferase BQ2027_MB2256C.